A 171-amino-acid polypeptide reads, in one-letter code: UPF0763 protein KHP_0657 (171 aa).

Belongs to the UPF0763 family.

The chain is UPF0763 protein KHP_0657 from Helicobacter pylori (strain 51).